Reading from the N-terminus, the 235-residue chain is uncharacterized protein (235 aa).

Transmembrane regions (helical) follow at residues 41-61, 71-91, and 129-149; these read IFWH…IYRL, LRTF…IEFP, and IGII…TPTI.

Its subcellular location is the membrane. This is an uncharacterized protein from Schizosaccharomyces pombe (strain 972 / ATCC 24843) (Fission yeast).